The primary structure comprises 288 residues: Lipoyl synthase (288 aa).

Cys42, Cys47, Cys53, Cys68, Cys72, Cys75, and Ser280 together coordinate [4Fe-4S] cluster. Residues 54–269 enclose the Radical SAM core domain; it reads WGEGTATFMI…EKYGIELGFR (216 aa).

It belongs to the radical SAM superfamily. Lipoyl synthase family. The cofactor is [4Fe-4S] cluster.

It is found in the cytoplasm. The catalysed reaction is [[Fe-S] cluster scaffold protein carrying a second [4Fe-4S](2+) cluster] + N(6)-octanoyl-L-lysyl-[protein] + 2 oxidized [2Fe-2S]-[ferredoxin] + 2 S-adenosyl-L-methionine + 4 H(+) = [[Fe-S] cluster scaffold protein] + N(6)-[(R)-dihydrolipoyl]-L-lysyl-[protein] + 4 Fe(3+) + 2 hydrogen sulfide + 2 5'-deoxyadenosine + 2 L-methionine + 2 reduced [2Fe-2S]-[ferredoxin]. It participates in protein modification; protein lipoylation via endogenous pathway; protein N(6)-(lipoyl)lysine from octanoyl-[acyl-carrier-protein]: step 2/2. Functionally, catalyzes the radical-mediated insertion of two sulfur atoms into the C-6 and C-8 positions of the octanoyl moiety bound to the lipoyl domains of lipoate-dependent enzymes, thereby converting the octanoylated domains into lipoylated derivatives. This chain is Lipoyl synthase, found in Flavobacterium johnsoniae (strain ATCC 17061 / DSM 2064 / JCM 8514 / BCRC 14874 / CCUG 350202 / NBRC 14942 / NCIMB 11054 / UW101) (Cytophaga johnsonae).